The following is a 246-amino-acid chain: Mast cell protease 9 (246 aa).

The N-terminal stretch at 1-18 (MQALLFLMALLLPSRAGA) is a signal peptide. Residues 19-20 (EE) constitute a propeptide, activation peptide. Residues 21 to 244 (IIGGVESEPH…HVPWINRVIK (224 aa)) form the Peptidase S1 domain. A disulfide bond links C50 and C66. Catalysis depends on charge relay system residues H65 and D109. Cystine bridges form between C143/C208 and C174/C187. S202 acts as the Charge relay system in catalysis.

This sequence belongs to the peptidase S1 family. Granzyme subfamily. As to expression, selectively expressed in uterine mast cells.

The sequence is that of Mast cell protease 9 (Mcpt9) from Mus musculus (Mouse).